The following is an 883-amino-acid chain: Phosphoenolpyruvate carboxylase (883 aa).

Catalysis depends on residues His-138 and Lys-546.

Belongs to the PEPCase type 1 family. The cofactor is Mg(2+).

The catalysed reaction is oxaloacetate + phosphate = phosphoenolpyruvate + hydrogencarbonate. Functionally, forms oxaloacetate, a four-carbon dicarboxylic acid source for the tricarboxylic acid cycle. This is Phosphoenolpyruvate carboxylase from Shigella flexneri.